The chain runs to 348 residues: Lipopolysaccharide heptosyltransferase 2 (348 aa).

It belongs to the glycosyltransferase 9 family.

It catalyses the reaction an L-alpha-D-Hep-(1-&gt;5)-[alpha-Kdo-(2-&gt;4)]-alpha-Kdo-(2-&gt;6)-lipid A + ADP-L-glycero-beta-D-manno-heptose = an L-alpha-D-Hep-(1-&gt;3)-L-alpha-D-Hep-(1-&gt;5)-[alpha-Kdo-(2-&gt;4)]-alpha-Kdo-(2-&gt;6)-lipid A + ADP + H(+). The catalysed reaction is L-alpha-D-Hep-(1-&gt;5)-[alpha-Kdo-(2-&gt;4)]-alpha-Kdo-(2-&gt;6)-lipid A (E. coli) + ADP-L-glycero-beta-D-manno-heptose = L-alpha-D-Hep-(1-&gt;3)-L-alpha-D-Hep-(1-&gt;5)-[alpha-Kdo-(2-&gt;4)]-alpha-Kdo-(2-&gt;6)-lipid A (E. coli) + ADP + H(+). The protein operates within bacterial outer membrane biogenesis; LPS core biosynthesis. Its function is as follows. Glycosyltransferase involved in the biosynthesis of the core oligosaccharide region of lipopolysaccharide (LPS). Catalyzes the addition of the second heptose unit to the heptosyl-Kdo2-lipid A module. The analog ADP-mannose can serve as an alternative donor in place of ADP-L-glycero-D-manno-heptose, but with lower efficiency. In Escherichia coli (strain K12), this protein is Lipopolysaccharide heptosyltransferase 2.